Reading from the N-terminus, the 321-residue chain is Ornithine carbamoyltransferase (321 aa).

Carbamoyl phosphate is bound by residues 53 to 56, glutamine 80, arginine 104, and 131 to 134; these read STRT and HPCQ. L-ornithine contacts are provided by residues asparagine 166, aspartate 230, and 234 to 235; that span reads SM. Residues 270 to 271 and arginine 298 each bind carbamoyl phosphate; that span reads CL.

This sequence belongs to the aspartate/ornithine carbamoyltransferase superfamily. OTCase family.

It localises to the cytoplasm. The enzyme catalyses carbamoyl phosphate + L-ornithine = L-citrulline + phosphate + H(+). The protein operates within amino-acid degradation; L-arginine degradation via ADI pathway; carbamoyl phosphate from L-arginine: step 2/2. In terms of biological role, reversibly catalyzes the transfer of the carbamoyl group from carbamoyl phosphate (CP) to the N(epsilon) atom of ornithine (ORN) to produce L-citrulline. The sequence is that of Ornithine carbamoyltransferase from Bifidobacterium longum subsp. infantis (strain ATCC 15697 / DSM 20088 / JCM 1222 / NCTC 11817 / S12).